The chain runs to 512 residues: MAEPSVESSSPGGSATSDDHEFDPSADMLVHDFDDERTLEEEEMMEGETNFSSEIEDLAREGDMPIHELLSLYGYGSTVRLPEEDEEEEEEEEEGEDDEDADNDDNSGCSGENKEENIKDSSGQEDETQSSNDDPSQSVASQDAQEIIRPRRCKYFDTNSEVEEESEEDEDYIPSEDWKKEIMVGSMFQAEIPVGICRYKENEKVYENDDQLLWDPEYLPEDKVIIFLKDASRRTGDEKGVEAIPEGSHIKDNEQALYELVKCNFDTEEALRRLRFNVKAAREELSVWTEEECRNFEQGLKAYGKDFHLIQANKVRTRSVGECVAFYYMWKKSERYDFFAQQTRFGKKKYNLHPGVTDYMDRLLDESESAASSRAPSPPPTASNSSNSQSEKEDGTVSTANQNGVSSNGPGEILNKEEVKVEGLHINGPTGGNKKPLHADMDTNGYETDNLTTDPKLAHMTARNENDFDEKSERPAKRRRVNSNGKESPGSSEFFQEAVSHGKFEELENTDD.

Positions 1 to 16 (MAEPSVESSSPGGSAT) are enriched in low complexity. Disordered stretches follow at residues 1 to 63 (MAEP…REGD) and 75 to 173 (YGST…EDYI). The residue at position 10 (Ser10) is a Phosphoserine. The segment covering 17–36 (SDDHEFDPSADMLVHDFDDE) has biased composition (basic and acidic residues). 2 stretches are compositionally biased toward acidic residues: residues 37–46 (RTLEEEEMME) and 83–105 (EEDE…DNDD). Residues 129–144 (QSSNDDPSQSVASQDA) are compositionally biased toward polar residues. At Ser141 the chain carries Phosphoserine. Tyr155 is subject to Phosphotyrosine. Ser160 and Ser166 each carry phosphoserine. A compositionally biased stretch (acidic residues) spans 160-173 (SEVEEESEEDEDYI). The ELM2 domain occupies 180 to 278 (KEIMVGSMFQ…EALRRLRFNV (99 aa)). Positions 180–284 (KEIMVGSMFQ…RFNVKAAREE (105 aa)) are interaction with HDAC1. Residue Lys239 forms a Glycyl lysine isopeptide (Lys-Gly) (interchain with G-Cter in SUMO2) linkage. An SANT domain is found at 283–335 (EELSVWTEEECRNFEQGLKAYGKDFHLIQANKVRTRSVGECVAFYYMWKKSER). A disordered region spans residues 366–512 (ESESAASSRA…KFEELENTDD (147 aa)). Residues Ser367, Ser369, and Ser377 each carry the phosphoserine modification. The segment covering 396–409 (TVSTANQNGVSSNG) has biased composition (polar residues). The span at 414-423 (LNKEEVKVEG) shows a compositional bias: basic and acidic residues. A Glycyl lysine isopeptide (Lys-Gly) (interchain with G-Cter in SUMO2) cross-link involves residue Lys420. At Thr448 the chain carries Phosphothreonine. The segment covering 462 to 475 (ARNENDFDEKSERP) has biased composition (basic and acidic residues). The segment covering 482-494 (NSNGKESPGSSEF) has biased composition (polar residues). Residues Ser483, Ser488, and Ser491 each carry the phosphoserine modification.

As to quaternary structure, interacts with HDAC1. Part of a complex containing at least CDYL, MIER1, MIER2, HDAC1 and HDAC2. In terms of tissue distribution, ubiquitously expressed, but at very low levels. However, consistent level of expression are observed in heart, testis, thyroid, ovary and adrenal gland. Transcripts are up-regulated in breast carcinoma cell lines and tumor.

It localises to the nucleus. The protein resides in the cytoplasm. In terms of biological role, transcriptional repressor regulating the expression of a number of genes including SP1 target genes. Probably functions through recruitment of HDAC1 a histone deacetylase involved in chromatin silencing. The protein is Mesoderm induction early response protein 1 (MIER1) of Homo sapiens (Human).